A 500-amino-acid polypeptide reads, in one-letter code: Probable cytosol aminopeptidase (500 aa).

Mn(2+)-binding residues include lysine 265 and aspartate 270. The active site involves lysine 277. The Mn(2+) site is built by aspartate 288, aspartate 347, and glutamate 349. Residue arginine 351 is part of the active site.

This sequence belongs to the peptidase M17 family. Mn(2+) serves as cofactor.

The protein localises to the cytoplasm. It catalyses the reaction Release of an N-terminal amino acid, Xaa-|-Yaa-, in which Xaa is preferably Leu, but may be other amino acids including Pro although not Arg or Lys, and Yaa may be Pro. Amino acid amides and methyl esters are also readily hydrolyzed, but rates on arylamides are exceedingly low.. The enzyme catalyses Release of an N-terminal amino acid, preferentially leucine, but not glutamic or aspartic acids.. Functionally, presumably involved in the processing and regular turnover of intracellular proteins. Catalyzes the removal of unsubstituted N-terminal amino acids from various peptides. The polypeptide is Probable cytosol aminopeptidase (Bdellovibrio bacteriovorus (strain ATCC 15356 / DSM 50701 / NCIMB 9529 / HD100)).